The sequence spans 21 residues: Venom peptide Tv1 (21 aa).

3 disulfide bridges follow: C4–C20, C5–C21, and C7–C16.

In terms of tissue distribution, expressed by the salivary gland. This peptide is considered as a venom peptide.

It is found in the secreted. Functionally, injections of 20 uM of this synthetic peptide (Ile) causes partial paralysis to polychaete worms (Nereis virens), the natural prey of terebrid snails. This paralysis may be due to an inhibition of nicotinic receptors at the neuromuscular junction. The protein is Venom peptide Tv1 of Terebra variegata (Variegate auger snail).